Here is a 300-residue protein sequence, read N- to C-terminus: Ribonuclease HIII (300 aa).

In terms of domain architecture, RNase H type-2 spans Ile-83–Lys-300. A divalent metal cation is bound by residues Asp-89, Glu-90, and Asp-194.

Belongs to the RNase HII family. RnhC subfamily. Mn(2+) serves as cofactor. It depends on Mg(2+) as a cofactor.

The protein localises to the cytoplasm. The enzyme catalyses Endonucleolytic cleavage to 5'-phosphomonoester.. In terms of biological role, endonuclease that specifically degrades the RNA of RNA-DNA hybrids. This chain is Ribonuclease HIII, found in Streptococcus pyogenes serotype M1.